Here is a 439-residue protein sequence, read N- to C-terminus: GTPase Obg (439 aa).

The Obg domain occupies Thr5–Leu164. An OBG-type G domain is found at Ala165–Arg335. GTP-binding positions include Gly171–Ser178, Phe196–Thr200, Asp217–Gly220, Asn287–Asp290, and Ser316–Ala318. 2 residues coordinate Mg(2+): Ser178 and Thr198. The OCT domain maps to Leu356–Asp433.

It belongs to the TRAFAC class OBG-HflX-like GTPase superfamily. OBG GTPase family. In terms of assembly, monomer. Mg(2+) is required as a cofactor.

It localises to the cytoplasm. Its function is as follows. An essential GTPase which binds GTP, GDP and possibly (p)ppGpp with moderate affinity, with high nucleotide exchange rates and a fairly low GTP hydrolysis rate. Plays a role in control of the cell cycle, stress response, ribosome biogenesis and in those bacteria that undergo differentiation, in morphogenesis control. The protein is GTPase Obg of Chloroflexus aurantiacus (strain ATCC 29364 / DSM 637 / Y-400-fl).